Consider the following 121-residue polypeptide: Small ribosomal subunit protein uS13 (121 aa).

Positions 89 to 121 (MRHRRGLPVRGQHTKNNARTRKGKKVSIAGRKK) are disordered.

It belongs to the universal ribosomal protein uS13 family. As to quaternary structure, part of the 30S ribosomal subunit. Forms a loose heterodimer with protein S19. Forms two bridges to the 50S subunit in the 70S ribosome.

Located at the top of the head of the 30S subunit, it contacts several helices of the 16S rRNA. In the 70S ribosome it contacts the 23S rRNA (bridge B1a) and protein L5 of the 50S subunit (bridge B1b), connecting the 2 subunits; these bridges are implicated in subunit movement. Contacts the tRNAs in the A and P-sites. The chain is Small ribosomal subunit protein uS13 from Pediococcus pentosaceus (strain ATCC 25745 / CCUG 21536 / LMG 10740 / 183-1w).